A 329-amino-acid chain; its full sequence is Deoxynucleotidyltransferase terminal-interacting protein 1 (329 aa).

2 disordered regions span residues 1 to 22 (MGAT…GGLE) and 147 to 178 (KRGR…ILSS). The interval 56 to 147 (MTTSFTDPAI…RLTHELPGIK (92 aa)) is important for dimerization. Positions 147–158 (KRGRQAEEECAH) are enriched in basic and acidic residues. Residues 159–173 (RGSPLPKKRKGRPPG) constitute a DNA-binding region (a.T hook). Phosphoserine is present on S161. The Nuclear localization signal signature appears at 164 to 170 (PKKRKGR). The important for DNA and nucleosome binding stretch occupies residues 197-316 (REGPKWDPAR…MRKYMETLRT (120 aa)). Residues 216–237 (GSRANKALGMGGTRGRIYIKHP) constitute a DNA-binding region (H-T-H motif).

Monomer and homodimer. A minor proportion may form homotrimers. Interacts with ZNF541. Interacts with the terminal deoxynucleotidyltransferase DNTT. Interacts with TRERF1. Identified in a histone deacetylase complex that contains DNTTIP1, HDAC1 and MIDEAS; this complex assembles into a tetramer that contains four copies of each protein chain. Component of a histone deacetylase complex containing DNTTIP1, ZNF541, HDAC1 and HDAC2. Identified in a complex with KCTD19, HDAC1, HDAC2 and ZNF541.

Its subcellular location is the nucleus. Its function is as follows. Increases DNTT terminal deoxynucleotidyltransferase activity (in vitro). Also acts as a transcriptional regulator, binding to the consensus sequence 5'-GNTGCATG-3' following an AT-tract. Associates with RAB20 promoter and positively regulates its transcription. Binds DNA and nucleosomes; may recruit HDAC1 complexes to nucleosomes or naked DNA. This Pongo abelii (Sumatran orangutan) protein is Deoxynucleotidyltransferase terminal-interacting protein 1 (DNTTIP1).